A 182-amino-acid polypeptide reads, in one-letter code: Keratin, type II cytoskeletal 68 kDa, component IA (182 aa).

Positions 1 to 66 constitute an IF rod domain; sequence DAEQHGEVAL…TLLEGEECRM (66 aa). Residues 1-66 are coil 2B; sequence DAEQHGEVAL…TLLEGEECRM (66 aa). The tract at residues 67–86 is H2 subdomain; the sequence is SGECQSSVSIEMVHNTTSSS. The segment at 67–182 is tail; it reads SGECQSSVSI…SQSQRSHHKL (116 aa). A V2 subdomain region spans residues 87–162; the sequence is SGGSGALGGG…GSCAVSGVGG (76 aa). A compositionally biased stretch (gly residues) spans 104–124; the sequence is GSGGLGSGSLGSGRLGSGGRG. Residues 104-182 are disordered; it reads GSGGLGSGSL…SQSQRSHHKL (79 aa). Low complexity-rich tracts occupy residues 144 to 158 and 165 to 176; these read VRGS…CAVS and SVRVTQSSSQSQ. Residues 163–182 form an E2 subdomain region; it reads RGSVRVTQSSSQSQRSHHKL.

The protein belongs to the intermediate filament family. In terms of assembly, heterotetramer of two type I and two type II keratins.

The protein is Keratin, type II cytoskeletal 68 kDa, component IA of Bos taurus (Bovine).